The following is a 342-amino-acid chain: Pre-mRNA-splicing factor 18 (342 aa).

It belongs to the PRP18 family. As to quaternary structure, interacts with the spliceosome. Part of a complex containing U4/U6 snRNPs.

Its subcellular location is the nucleus speckle. Participates in the second step of pre-mRNA splicing. In Danio rerio (Zebrafish), this protein is Pre-mRNA-splicing factor 18 (prpf18).